The sequence spans 189 residues: Threonylcarbamoyl-AMP synthase (189 aa).

The YrdC-like domain maps to 3–189; sequence TTSVTEAAEC…NALTGEVIRP (187 aa).

It belongs to the SUA5 family. TsaC subfamily.

The protein localises to the cytoplasm. It catalyses the reaction L-threonine + hydrogencarbonate + ATP = L-threonylcarbamoyladenylate + diphosphate + H2O. Required for the formation of a threonylcarbamoyl group on adenosine at position 37 (t(6)A37) in tRNAs that read codons beginning with adenine. Catalyzes the conversion of L-threonine, HCO(3)(-)/CO(2) and ATP to give threonylcarbamoyl-AMP (TC-AMP) as the acyladenylate intermediate, with the release of diphosphate. The polypeptide is Threonylcarbamoyl-AMP synthase (Acinetobacter baumannii (strain ACICU)).